Reading from the N-terminus, the 275-residue chain is 4-diphosphocytidyl-2-C-methyl-D-erythritol kinase (275 aa).

K14 is a catalytic residue. Position 98 to 108 (98 to 108 (PMGAGLGGGSS)) interacts with ATP. The active site involves D140.

This sequence belongs to the GHMP kinase family. IspE subfamily.

The enzyme catalyses 4-CDP-2-C-methyl-D-erythritol + ATP = 4-CDP-2-C-methyl-D-erythritol 2-phosphate + ADP + H(+). The protein operates within isoprenoid biosynthesis; isopentenyl diphosphate biosynthesis via DXP pathway; isopentenyl diphosphate from 1-deoxy-D-xylulose 5-phosphate: step 3/6. In terms of biological role, catalyzes the phosphorylation of the position 2 hydroxy group of 4-diphosphocytidyl-2C-methyl-D-erythritol. The sequence is that of 4-diphosphocytidyl-2-C-methyl-D-erythritol kinase from Francisella tularensis subsp. holarctica (strain FTNF002-00 / FTA).